The sequence spans 440 residues: Microtubule-associated tumor suppressor 1 homolog (440 aa).

Residues Ile-106 to Leu-401 are a coiled coil. Ser-373, Ser-394, Ser-415, Ser-425, Ser-429, Ser-431, Ser-433, Ser-434, and Ser-438 each carry phosphoserine. Residues Gly-407–Arg-440 are disordered. The segment covering Ser-425 to Arg-440 has biased composition (low complexity).

It belongs to the MTUS1 family. Homodimer. Interacts with AGTR2. Interacts with PTPN6. As to expression, present in neurons (at protein level).

The protein resides in the mitochondrion. It is found in the golgi apparatus. Its subcellular location is the cell membrane. The protein localises to the nucleus. In terms of biological role, cooperates with AGTR2 to inhibit ERK2 activation and cell proliferation. May be required for AGTR2 cell surface expression. Together with PTPN6, induces UBE2V2 expression upon angiotensin-II stimulation. In Rattus norvegicus (Rat), this protein is Microtubule-associated tumor suppressor 1 homolog (Mtus1).